Here is a 560-residue protein sequence, read N- to C-terminus: Glucose-6-phosphate isomerase, cytosolic (560 aa).

Alanine 2 bears the N-acetylalanine mark. The active-site Proton donor is the glutamate 361. Active-site residues include histidine 392 and lysine 517.

It belongs to the GPI family. Homodimer.

Its subcellular location is the cytoplasm. The catalysed reaction is alpha-D-glucose 6-phosphate = beta-D-fructose 6-phosphate. The protein operates within carbohydrate degradation; glycolysis; D-glyceraldehyde 3-phosphate and glycerone phosphate from D-glucose: step 2/4. Inhibited by glycerol-3-P (G3P). The polypeptide is Glucose-6-phosphate isomerase, cytosolic (PGIC) (Arabidopsis thaliana (Mouse-ear cress)).